Here is a 147-residue protein sequence, read N- to C-terminus: D-aminoacyl-tRNA deacylase (147 aa).

Residues 136–137 carry the Gly-cisPro motif, important for rejection of L-amino acids motif; the sequence is GP.

It belongs to the DTD family. In terms of assembly, homodimer.

The protein localises to the cytoplasm. It catalyses the reaction glycyl-tRNA(Ala) + H2O = tRNA(Ala) + glycine + H(+). It carries out the reaction a D-aminoacyl-tRNA + H2O = a tRNA + a D-alpha-amino acid + H(+). An aminoacyl-tRNA editing enzyme that deacylates mischarged D-aminoacyl-tRNAs. Also deacylates mischarged glycyl-tRNA(Ala), protecting cells against glycine mischarging by AlaRS. Acts via tRNA-based rather than protein-based catalysis; rejects L-amino acids rather than detecting D-amino acids in the active site. By recycling D-aminoacyl-tRNA to D-amino acids and free tRNA molecules, this enzyme counteracts the toxicity associated with the formation of D-aminoacyl-tRNA entities in vivo and helps enforce protein L-homochirality. The sequence is that of D-aminoacyl-tRNA deacylase from Streptococcus thermophilus (strain CNRZ 1066).